The chain runs to 630 residues: MSKIIGIDLGTTNSCVSVMEGNSPVVVPNSEGKRTTPSIIAFIEGGETKVGDPAKRQAVTNPSKTIFSIKRFMGRNFSEVTEELKNIPYKIIKGENDTPRVSIGNKLYTPQEISAMILQKMKKTAEDYLGNEVKQAVITVPAYFNDAQRQATKEAGEIAGLNVERIINEPTAAALAYGLDKNNQNKKIVVYDLGGGTFDISILELGDGVFEVLSTSGDTHLGGDDFDKVIIDWLVKEFKVEQGVDLSNDSMAYQRLKESAEKAKIELSSSTKTEINLPYITATPSGPKHLVKTLTRAKFEELSDDLIKRSLYPCKNALKASNLISKDIDEVILVGGSTRIPKIQEQVEKFFEKIPSKGVNPDEVVSIGAAIQGGVLSGDVKDVLLLDVTPLSLGIETLGGVFTKLIDSNTTIPTKKSEIFSTATDNQSAVTIRVGQGERSMFNDNKEIGRFDLIDIAPAPRGIPQIEVTFDIDANGILNVSAKDKSTGKEQSIRIQASSGLSKNEIERMKKEAQENADKDNKIKEEIEKINSADSIIFQTEKQLKEYGNKISEETKKKLEINLNNLKDARNSKNISDIDNYINKINNILSSSYQEIYKNNESVKNNESVKNNESVKNNESVKDVDFEEIK.

Threonine 197 is modified (phosphothreonine; by autocatalysis). Over residues 604–618 (KNNESVKNNESVKNN) the composition is skewed to polar residues. Positions 604–630 (KNNESVKNNESVKNNESVKDVDFEEIK) are disordered. Over residues 619-630 (ESVKDVDFEEIK) the composition is skewed to basic and acidic residues.

Belongs to the heat shock protein 70 family.

Its function is as follows. Acts as a chaperone. The chain is Chaperone protein DnaK from Karelsulcia muelleri (strain GWSS) (Sulcia muelleri).